The primary structure comprises 1227 residues: Pesticidal crystal protein Cry1Be (1227 aa).

The protein belongs to the delta endotoxin family.

Functionally, promotes colloidosmotic lysis by binding to the midgut epithelial cells of many lepidopteran larvae. The chain is Pesticidal crystal protein Cry1Be (cry1Be) from Bacillus thuringiensis.